Here is a 218-residue protein sequence, read N- to C-terminus: Pyridoxal 5'-phosphate synthase subunit PdxT (218 aa).

54–56 (GES) is an L-glutamine binding site. Cysteine 86 (nucleophile) is an active-site residue. L-glutamine contacts are provided by residues arginine 120 and 149-150 (IR). Residues histidine 197 and glutamate 199 each act as charge relay system in the active site.

Belongs to the glutaminase PdxT/SNO family. In the presence of PdxS, forms a dodecamer of heterodimers. Only shows activity in the heterodimer.

The catalysed reaction is aldehydo-D-ribose 5-phosphate + D-glyceraldehyde 3-phosphate + L-glutamine = pyridoxal 5'-phosphate + L-glutamate + phosphate + 3 H2O + H(+). It catalyses the reaction L-glutamine + H2O = L-glutamate + NH4(+). The protein operates within cofactor biosynthesis; pyridoxal 5'-phosphate biosynthesis. Its function is as follows. Catalyzes the hydrolysis of glutamine to glutamate and ammonia as part of the biosynthesis of pyridoxal 5'-phosphate. The resulting ammonia molecule is channeled to the active site of PdxS. The chain is Pyridoxal 5'-phosphate synthase subunit PdxT from Saccharopolyspora erythraea (strain ATCC 11635 / DSM 40517 / JCM 4748 / NBRC 13426 / NCIMB 8594 / NRRL 2338).